The following is a 131-amino-acid chain: Phosphoribosyl-AMP cyclohydrolase (131 aa).

Aspartate 76 provides a ligand contact to Mg(2+). Cysteine 77 is a binding site for Zn(2+). Aspartate 78 and aspartate 80 together coordinate Mg(2+). Residues cysteine 94 and cysteine 101 each coordinate Zn(2+).

This sequence belongs to the PRA-CH family. Homodimer. Mg(2+) is required as a cofactor. Requires Zn(2+) as cofactor.

It is found in the cytoplasm. It carries out the reaction 1-(5-phospho-beta-D-ribosyl)-5'-AMP + H2O = 1-(5-phospho-beta-D-ribosyl)-5-[(5-phospho-beta-D-ribosylamino)methylideneamino]imidazole-4-carboxamide. It functions in the pathway amino-acid biosynthesis; L-histidine biosynthesis; L-histidine from 5-phospho-alpha-D-ribose 1-diphosphate: step 3/9. Catalyzes the hydrolysis of the adenine ring of phosphoribosyl-AMP. This is Phosphoribosyl-AMP cyclohydrolase from Stutzerimonas stutzeri (strain A1501) (Pseudomonas stutzeri).